Here is a 353-residue protein sequence, read N- to C-terminus: MNGTEGENFYIPFSNKTGLARSPFEYPQYYLAEPWKYSVLAAYMFFLILVGFPVNFLTLFVTVQHKKLRTPLNYILLNLAVANLFMVLFGFTLTMYSSMNGYFVFGPTMCNFEGFFATLGGEMSLWSLVVLAIERYIVICKPMGNFRFGSTHAYMGVAFTWFMALSCAAPPLVGWSRYLPEGMQCSCGPDYYTLNPNFNNESFVIYMFLVHFIIPFIVIFFCYGRLLCTVKEAAAAQQESASTQKAEKEVTRMVVLMVIGFLVCWVPYASVAFYIFTHQGSDFGATFMTVPAFFAKTSALYNPIIYILMNKQFRNCMITTLCCGKNPLGDEDSGASTSKTEVSSVSTSQVSPA.

At 1 to 36 (MNGTEGENFYIPFSNKTGLARSPFEYPQYYLAEPWK) the chain is on the extracellular side. N-linked (GlcNAc...) asparagine glycans are attached at residues Asn2 and Asn15. A helical transmembrane segment spans residues 37-61 (YSVLAAYMFFLILVGFPVNFLTLFV). Residues 62 to 73 (TVQHKKLRTPLN) are Cytoplasmic-facing. A helical membrane pass occupies residues 74 to 96 (YILLNLAVANLFMVLFGFTLTMY). Residues 97–110 (SSMNGYFVFGPTMC) lie on the Extracellular side of the membrane. Cys110 and Cys187 are disulfide-bonded. Residues 111-133 (NFEGFFATLGGEMSLWSLVVLAI) traverse the membrane as a helical segment. The short motif at 134 to 136 (ERY) is the 'Ionic lock' involved in activated form stabilization element. Residues 134-152 (ERYIVICKPMGNFRFGSTH) lie on the Cytoplasmic side of the membrane. A helical transmembrane segment spans residues 153–173 (AYMGVAFTWFMALSCAAPPLV). Residues 174 to 202 (GWSRYLPEGMQCSCGPDYYTLNPNFNNES) are Extracellular-facing. Residues 203-224 (FVIYMFLVHFIIPFIVIFFCYG) traverse the membrane as a helical segment. Residues 225-252 (RLLCTVKEAAAAQQESASTQKAEKEVTR) are Cytoplasmic-facing. Residues 253–274 (MVVLMVIGFLVCWVPYASVAFY) traverse the membrane as a helical segment. Residues 275–286 (IFTHQGSDFGAT) lie on the Extracellular side of the membrane. Residues 287–308 (FMTVPAFFAKTSALYNPIIYIL) form a helical membrane-spanning segment. An N6-(retinylidene)lysine modification is found at Lys296. Residues 309–353 (MNKQFRNCMITTLCCGKNPLGDEDSGASTSKTEVSSVSTSQVSPA) are Cytoplasmic-facing. The disordered stretch occupies residues 330 to 353 (DEDSGASTSKTEVSSVSTSQVSPA). Over residues 336-353 (STSKTEVSSVSTSQVSPA) the composition is skewed to low complexity.

Belongs to the G-protein coupled receptor 1 family. Opsin subfamily. Post-translationally, phosphorylated on some or all of the serine and threonine residues present in the C-terminal region. Contains one covalently linked retinal chromophore.

The protein localises to the membrane. It is found in the cell projection. The protein resides in the cilium. It localises to the photoreceptor outer segment. In terms of biological role, photoreceptor required for image-forming vision at low light intensity. While most salt water fish species use retinal as chromophore, most freshwater fish use 3-dehydroretinal, or a mixture of retinal and 3-dehydroretinal. Light-induced isomerization of 11-cis to all-trans retinal triggers a conformational change that activates signaling via G-proteins. Subsequent receptor phosphorylation mediates displacement of the bound G-protein alpha subunit by arrestin and terminates signaling. This chain is Rhodopsin (RHO), found in Petromyzon marinus (Sea lamprey).